A 165-amino-acid chain; its full sequence is Crossover junction endodeoxyribonuclease RuvC (165 aa).

Catalysis depends on residues Asp7, Glu67, and Asp140. Asp7, Glu67, and Asp140 together coordinate Mg(2+).

It belongs to the RuvC family. As to quaternary structure, homodimer which binds Holliday junction (HJ) DNA. The HJ becomes 2-fold symmetrical on binding to RuvC with unstacked arms; it has a different conformation from HJ DNA in complex with RuvA. In the full resolvosome a probable DNA-RuvA(4)-RuvB(12)-RuvC(2) complex forms which resolves the HJ. Requires Mg(2+) as cofactor.

The protein localises to the cytoplasm. It catalyses the reaction Endonucleolytic cleavage at a junction such as a reciprocal single-stranded crossover between two homologous DNA duplexes (Holliday junction).. Its function is as follows. The RuvA-RuvB-RuvC complex processes Holliday junction (HJ) DNA during genetic recombination and DNA repair. Endonuclease that resolves HJ intermediates. Cleaves cruciform DNA by making single-stranded nicks across the HJ at symmetrical positions within the homologous arms, yielding a 5'-phosphate and a 3'-hydroxyl group; requires a central core of homology in the junction. The consensus cleavage sequence is 5'-(A/T)TT(C/G)-3'. Cleavage occurs on the 3'-side of the TT dinucleotide at the point of strand exchange. HJ branch migration catalyzed by RuvA-RuvB allows RuvC to scan DNA until it finds its consensus sequence, where it cleaves and resolves the cruciform DNA. This Caldanaerobacter subterraneus subsp. tengcongensis (strain DSM 15242 / JCM 11007 / NBRC 100824 / MB4) (Thermoanaerobacter tengcongensis) protein is Crossover junction endodeoxyribonuclease RuvC.